An 813-amino-acid polypeptide reads, in one-letter code: LPS-assembly protein LptD (813 aa).

The N-terminal stretch at 1–22 is a signal peptide; it reads MRRALRLLPLPLSIAICLPAMA.

Belongs to the LptD family. In terms of assembly, component of the lipopolysaccharide transport and assembly complex. Interacts with LptE and LptA.

It localises to the cell outer membrane. Its function is as follows. Together with LptE, is involved in the assembly of lipopolysaccharide (LPS) at the surface of the outer membrane. This chain is LPS-assembly protein LptD, found in Xanthomonas oryzae pv. oryzae (strain KACC10331 / KXO85).